Here is a 232-residue protein sequence, read N- to C-terminus: 5'-methylthioadenosine/S-adenosylhomocysteine nucleosidase (232 aa).

E12 (proton acceptor) is an active-site residue. Substrate-binding positions include G78, I152, and 173 to 174 (ME). The active-site Proton donor is D197.

It belongs to the PNP/UDP phosphorylase family. MtnN subfamily. In terms of assembly, homodimer.

The enzyme catalyses S-adenosyl-L-homocysteine + H2O = S-(5-deoxy-D-ribos-5-yl)-L-homocysteine + adenine. The catalysed reaction is S-methyl-5'-thioadenosine + H2O = 5-(methylsulfanyl)-D-ribose + adenine. It carries out the reaction 5'-deoxyadenosine + H2O = 5-deoxy-D-ribose + adenine. The protein operates within amino-acid biosynthesis; L-methionine biosynthesis via salvage pathway; S-methyl-5-thio-alpha-D-ribose 1-phosphate from S-methyl-5'-thioadenosine (hydrolase route): step 1/2. Catalyzes the irreversible cleavage of the glycosidic bond in both 5'-methylthioadenosine (MTA) and S-adenosylhomocysteine (SAH/AdoHcy) to adenine and the corresponding thioribose, 5'-methylthioribose and S-ribosylhomocysteine, respectively. Also cleaves 5'-deoxyadenosine, a toxic by-product of radical S-adenosylmethionine (SAM) enzymes, into 5-deoxyribose and adenine. Thus, is required for in vivo function of the radical SAM enzymes biotin synthase and lipoic acid synthase, that are inhibited by 5'-deoxyadenosine accumulation. In Salmonella choleraesuis (strain SC-B67), this protein is 5'-methylthioadenosine/S-adenosylhomocysteine nucleosidase.